Consider the following 111-residue polypeptide: Aspartate 1-decarboxylase (111 aa).

The active-site Schiff-base intermediate with substrate; via pyruvic acid is serine 25. Pyruvic acid (Ser) is present on serine 25. Threonine 57 is a binding site for substrate. Residue tyrosine 58 is the Proton donor of the active site. Position 73–75 (glycine 73–alanine 75) interacts with substrate.

It belongs to the PanD family. In terms of assembly, heterooctamer of four alpha and four beta subunits. Pyruvate serves as cofactor. In terms of processing, is synthesized initially as an inactive proenzyme, which is activated by self-cleavage at a specific serine bond to produce a beta-subunit with a hydroxyl group at its C-terminus and an alpha-subunit with a pyruvoyl group at its N-terminus.

It localises to the cytoplasm. The enzyme catalyses L-aspartate + H(+) = beta-alanine + CO2. It participates in cofactor biosynthesis; (R)-pantothenate biosynthesis; beta-alanine from L-aspartate: step 1/1. Functionally, catalyzes the pyruvoyl-dependent decarboxylation of aspartate to produce beta-alanine. The chain is Aspartate 1-decarboxylase from Francisella tularensis subsp. novicida (strain U112).